We begin with the raw amino-acid sequence, 388 residues long: Alpha-2B adrenergic receptor (388 aa).

A helical transmembrane segment spans residues 1–25 (AIAAVITFLILFTIFGNALVILAVL). Over 26–36 (TSRSLRAPQNL) the chain is Cytoplasmic. Residues 37–62 (FLVSLAAADILVATLIIPFSLANELL) form a helical membrane-spanning segment. Over 63–72 (GYWYFRRTWC) the chain is Extracellular. Cys72 and Cys151 form a disulfide bridge. Residues 73 to 95 (EVYLALDVLFCTSSIVHLCAISL) traverse the membrane as a helical segment. The Cytoplasmic portion of the chain corresponds to 96-117 (DRYWAVSRALEYNSKRTPRXIK). A helical transmembrane segment spans residues 118–140 (CIILTVWLIAAAISLPPLIYKGD). The Extracellular segment spans residues 141–156 (QGPQPRGRPQCKLNQE). The chain crosses the membrane as a helical span at residues 157 to 180 (AWYILSSSIGSFFAPCLIMILVYL). Over 181-352 (RIYVIAKRSN…LTREKRFTFV (172 aa)) the chain is Cytoplasmic. The segment at 193 to 309 (GPRAKGASRE…ASACNPPLQQ (117 aa)) is disordered. The span at 239-249 (PTGEKEGKTPE) shows a compositional bias: basic and acidic residues. Over residues 279 to 291 (PEEEAEEEEEECE) the composition is skewed to acidic residues. Residues 292-302 (PQAAPASSASA) are compositionally biased toward low complexity. A helical transmembrane segment spans residues 353–376 (LAVVIGVFVLCWFPFFFSYSLGAI). The Extracellular portion of the chain corresponds to 377–385 (CPQRCKVPH). Residues 386–388 (GLF) traverse the membrane as a helical segment.

Belongs to the G-protein coupled receptor 1 family. Adrenergic receptor subfamily. ADRA2B sub-subfamily. Interacts with RAB26. Interacts with PPP1R9B.

The protein localises to the cell membrane. Alpha-2 adrenergic receptors mediate the catecholamine-induced inhibition of adenylate cyclase through the action of G proteins. In Orycteropus afer (Aardvark), this protein is Alpha-2B adrenergic receptor (ADRA2B).